The following is a 320-amino-acid chain: Phospho-N-acetylmuramoyl-pentapeptide-transferase (320 aa).

9 helical membrane-spanning segments follow: residues 5–25 (LWALARAFIITVVFMPFLIKF), 51–71 (MGGLLFVLAAAISAFIGGAAY), 76–96 (GVVAMIIPVFALVAYAIIGGI), 124–144 (VVIMLIMWLLGVPFTLYIPMI), 145–165 (GTINLGLFYFVFLWFWLVGWS), 176–196 (GLLAGNSVVVYAAYTVIAMHM), 198–218 (NHIIVLFNFSIIGGLLGFLIF), 233–255 (LALGAGLAIESILLGVPFSLIWF), and 298–318 (WQIDLLFWIVSSILAVAGIFY).

This sequence belongs to the glycosyltransferase 4 family. MraY subfamily. It depends on Mg(2+) as a cofactor.

Its subcellular location is the cell membrane. It carries out the reaction UDP-N-acetyl-alpha-D-muramoyl-L-alanyl-gamma-D-glutamyl-L-lysyl-D-alanyl-D-alanine + di-trans,octa-cis-undecaprenyl phosphate = Mur2Ac(oyl-L-Ala-gamma-D-Glu-L-Lys-D-Ala-D-Ala)-di-trans,octa-cis-undecaprenyl diphosphate + UMP. Its pathway is cell wall biogenesis; peptidoglycan biosynthesis. Catalyzes the initial step of the lipid cycle reactions in the biosynthesis of the cell wall peptidoglycan: transfers peptidoglycan precursor phospho-MurNAc-pentapeptide from UDP-MurNAc-pentapeptide onto the lipid carrier undecaprenyl phosphate, yielding undecaprenyl-pyrophosphoryl-MurNAc-pentapeptide, known as lipid I. In Leuconostoc citreum (strain KM20), this protein is Phospho-N-acetylmuramoyl-pentapeptide-transferase.